Reading from the N-terminus, the 255-residue chain is Imidazole glycerol phosphate synthase subunit HisF (255 aa).

Residues Asp11 and Asp130 contribute to the active site.

It belongs to the HisA/HisF family. Heterodimer of HisH and HisF.

Its subcellular location is the cytoplasm. It carries out the reaction 5-[(5-phospho-1-deoxy-D-ribulos-1-ylimino)methylamino]-1-(5-phospho-beta-D-ribosyl)imidazole-4-carboxamide + L-glutamine = D-erythro-1-(imidazol-4-yl)glycerol 3-phosphate + 5-amino-1-(5-phospho-beta-D-ribosyl)imidazole-4-carboxamide + L-glutamate + H(+). Its pathway is amino-acid biosynthesis; L-histidine biosynthesis; L-histidine from 5-phospho-alpha-D-ribose 1-diphosphate: step 5/9. IGPS catalyzes the conversion of PRFAR and glutamine to IGP, AICAR and glutamate. The HisF subunit catalyzes the cyclization activity that produces IGP and AICAR from PRFAR using the ammonia provided by the HisH subunit. This is Imidazole glycerol phosphate synthase subunit HisF from Maricaulis maris (strain MCS10) (Caulobacter maris).